We begin with the raw amino-acid sequence, 566 residues long: Arginine--tRNA ligase (566 aa).

The short motif at 121 to 131 is the 'HIGH' region element; sequence PNIAKPMSMGH.

The protein belongs to the class-I aminoacyl-tRNA synthetase family. In terms of assembly, monomer.

It is found in the cytoplasm. It carries out the reaction tRNA(Arg) + L-arginine + ATP = L-arginyl-tRNA(Arg) + AMP + diphosphate. This chain is Arginine--tRNA ligase, found in Oenococcus oeni (strain ATCC BAA-331 / PSU-1).